We begin with the raw amino-acid sequence, 426 residues long: Glutamyl-tRNA reductase (426 aa).

Residues 51–54, Ser-110, 115–117, and Gln-121 contribute to the substrate site; these read TCNR and EAQ. Cys-52 (nucleophile) is an active-site residue. 190–195 is an NADP(+) binding site; that stretch reads GAGEMA.

It belongs to the glutamyl-tRNA reductase family. Homodimer.

The catalysed reaction is (S)-4-amino-5-oxopentanoate + tRNA(Glu) + NADP(+) = L-glutamyl-tRNA(Glu) + NADPH + H(+). Its pathway is porphyrin-containing compound metabolism; protoporphyrin-IX biosynthesis; 5-aminolevulinate from L-glutamyl-tRNA(Glu): step 1/2. Catalyzes the NADPH-dependent reduction of glutamyl-tRNA(Glu) to glutamate 1-semialdehyde (GSA). This is Glutamyl-tRNA reductase from Desulfotalea psychrophila (strain LSv54 / DSM 12343).